Reading from the N-terminus, the 709-residue chain is Polyribonucleotide nucleotidyltransferase (709 aa).

Residues aspartate 491 and aspartate 497 each coordinate Mg(2+). The KH domain occupies 557–617 (PKSESFMIPP…ENLQKAKTFI (61 aa)). One can recognise an S1 motif domain in the interval 641–709 (GERFVGKIKK…KNKVELGLVE (69 aa)).

Belongs to the polyribonucleotide nucleotidyltransferase family. Mg(2+) is required as a cofactor.

Its subcellular location is the cytoplasm. The enzyme catalyses RNA(n+1) + phosphate = RNA(n) + a ribonucleoside 5'-diphosphate. Involved in mRNA degradation. Catalyzes the phosphorolysis of single-stranded polyribonucleotides processively in the 3'- to 5'-direction. This is Polyribonucleotide nucleotidyltransferase from Helicobacter hepaticus (strain ATCC 51449 / 3B1).